The sequence spans 523 residues: L-tyrosine:2-oxoglutarate aminotransferase ucdG (523 aa).

It belongs to the class-I pyridoxal-phosphate-dependent aminotransferase family. In terms of assembly, homodimer. The cofactor is pyridoxal 5'-phosphate.

It localises to the cytoplasm. It carries out the reaction L-tyrosine + 2-oxoglutarate = 3-(4-hydroxyphenyl)pyruvate + L-glutamate. It functions in the pathway secondary metabolite biosynthesis. In terms of biological role, nonribosomal peptide synthetase that mediates the biosynthesis of usterphenyllins and uscandidusins, p-terphenyl derivatives. Within the pathway, ucdG is probably involved in the conversion of L-tyrosine into 4-hydroxyphenylpyruvate (HPPA) as a precursor for the usterphenyllin and uscandidusin biosynthesis. UcdE further prenylates position C-14 of ring C of usterphenyllin B to form usterphenyllin A. The pathway begin with the biosynthesis of 4-hydroxyphenylpyruvate (HPPA) from L-tyrosine, possibly by the aminotransferase ucdG. The nonribosomal peptide synthetase ucdA then condenses two HPPA units to produce atromentin. The key step in this pathway is the reduction and dehydration of atromentin to form a terphenyl triol intermediate, performed by the NAD-dependent dehydrogenase ucdB. Further O-methylation by the methyltransferase ucdC forms terphenyllin carrying two methoxy moieties at C-9 and C-12, and subsequent dihydroxylation at C-3 of ring A and C-15 of ring C by the flavin-dependent oxygenase ucdD leads to 3,15-dihydroxyterphenyllin. Prenylation by ucdE at position C-5 of ring A forms usterphenyllin B, and is followed by a second prenylation at position C-14 of ring C to form usterphenyllin A. The following furan ring formation that leads to uscandidusins A and B was proven to be an unexpected spontaneous non-enzymatic reaction. This is L-tyrosine:2-oxoglutarate aminotransferase ucdG from Aspergillus ustus.